Reading from the N-terminus, the 94-residue chain is MFTINAEVRKEQGKGASRRLRAANKFPAIIYGGAAAPVAIELDHDKVWNMQDKAEFYSEVLTVVVDGKEEKVKVQAVQRHAFKPKLTHIDFVRA.

The protein belongs to the bacterial ribosomal protein bL25 family. As to quaternary structure, part of the 50S ribosomal subunit; part of the 5S rRNA/L5/L18/L25 subcomplex. Contacts the 5S rRNA. Binds to the 5S rRNA independently of L5 and L18.

This is one of the proteins that binds to the 5S RNA in the ribosome where it forms part of the central protuberance. The sequence is that of Large ribosomal subunit protein bL25 from Klebsiella pneumoniae subsp. pneumoniae (strain ATCC 700721 / MGH 78578).